A 730-amino-acid polypeptide reads, in one-letter code: Dynein axonemal intermediate chain 7 (730 aa).

Over residues 1-14 (MAPKSKKAPSKKKM) the composition is skewed to basic residues. Residues 1–20 (MAPKSKKAPSKKKMTKAERL) are disordered.

This sequence belongs to the DNAI7 family. As to quaternary structure, part of the multisubunit axonemal dynein complex formed at least of two heavy chains and a number of intermediate and light chains. Interacts with tubulin. Associates with microtubule. Post-translationally, ubiquitinated. Ubiquitination leads to its degradation through the 26S proteasome. Ubiquitin-proteasome-mediated DNAI7 degradation occurs in mitosis. As to expression, high expressed in lung, kidney, and testis.

The protein localises to the cell projection. Its subcellular location is the cilium. It is found in the cytoplasm. Its function is as follows. Via its association with the multisubunit axonemal dynein complex, is potentially involved in the regulation of cilia function. May also act as a cell cycle regulator. In Mus musculus (Mouse), this protein is Dynein axonemal intermediate chain 7 (Dnai7).